The chain runs to 104 residues: Endogenous retrovirus group K member 21 Rec protein (104 aa).

The segment at methionine 1–threonine 48 is disordered. Over residues alanine 10–arginine 20 the composition is skewed to basic residues. The Nuclear localization signal motif lies at arginine 13–arginine 20. The short motif at tryptophan 49–leucine 58 is the Nuclear export signal element.

As to quaternary structure, forms homodimers, homotrimers, and homotetramers via a C-terminal domain. Associates with XPO1 and with ZNF145.

The protein localises to the cytoplasm. It localises to the nucleus. The protein resides in the nucleolus. Retroviral replication requires the nuclear export and translation of unspliced, singly-spliced and multiply-spliced derivatives of the initial genomic transcript. Rec interacts with a highly structured RNA element (RcRE) present in the viral 3'LTR and recruits the cellular nuclear export machinery. This permits export to the cytoplasm of unspliced genomic or incompletely spliced subgenomic viral transcripts. In Homo sapiens (Human), this protein is Endogenous retrovirus group K member 21 Rec protein (ERVK-21).